The sequence spans 162 residues: MRSRLWLGLAWLLLARAPGAPGGYPHLEGDVRWRRLFSSTHFFLRVDLGGRVQGTRWRHGQDSIVEIRSVRVGTVVIKAVYSGFYVAMNRRGRLYGSRVYSVDCRFRERIEENGYNTYASRRWRHRGRPMFLALDSQGIPRQGRRTRRHQLSTHFLPVLVSS.

Residues 1 to 22 form the signal peptide; sequence MRSRLWLGLAWLLLARAPGAPG.

Belongs to the heparin-binding growth factors family. As to quaternary structure, interacts with FGFR1 and FGFR2. Interacts with FGFBP1. Preferentially expressed in skin; low expression in brain. Expressed in the inner root sheath of the hair follicle.

The protein localises to the secreted. Functionally, plays a role in the fasting response, glucose homeostasis, lipolysis and lipogenesis. Can stimulate cell proliferation (in vitro). May be involved in hair development. The protein is Fibroblast growth factor 22 (Fgf22) of Mus musculus (Mouse).